The chain runs to 124 residues: MPTISQLVRKGRAKITKKSKSAALDSCPQRRGVCTRVYTTTPKKPNSAMRKVARVRLTNGKEVNAYIPGEGHNLQEHSIVLVRGGRVKDLPGVRYHIVRGALDTAGVEGRTQRRSKYGAKRPKK.

The interval 1 to 24 (MPTISQLVRKGRAKITKKSKSAAL) is disordered. Residues 9-20 (RKGRAKITKKSK) are compositionally biased toward basic residues. Residue Asp-89 is modified to 3-methylthioaspartic acid. Positions 105–124 (AGVEGRTQRRSKYGAKRPKK) are disordered. Over residues 112 to 124 (QRRSKYGAKRPKK) the composition is skewed to basic residues.

Belongs to the universal ribosomal protein uS12 family. Part of the 30S ribosomal subunit. Contacts proteins S8 and S17. May interact with IF1 in the 30S initiation complex.

Functionally, with S4 and S5 plays an important role in translational accuracy. Interacts with and stabilizes bases of the 16S rRNA that are involved in tRNA selection in the A site and with the mRNA backbone. Located at the interface of the 30S and 50S subunits, it traverses the body of the 30S subunit contacting proteins on the other side and probably holding the rRNA structure together. The combined cluster of proteins S8, S12 and S17 appears to hold together the shoulder and platform of the 30S subunit. The protein is Small ribosomal subunit protein uS12 of Christiangramia forsetii (strain DSM 17595 / CGMCC 1.15422 / KT0803) (Gramella forsetii).